Reading from the N-terminus, the 425-residue chain is 2,3-diketo-L-gulonate TRAP transporter large permease protein YiaN (425 aa).

The next 11 membrane-spanning stretches (helical) occupy residues 3–23, 54–74, 93–113, 139–159, 170–190, 209–229, 235–255, 277–297, 314–334, 355–375, and 399–419; these read VLIF…IAWA, FSLL…AGGL, LGYV…SAVA, LIAS…FIIF, LFMA…LTWW, IWHS…IIGG, FTPT…ATVI, VVMF…IAEL, LLFI…DLTP, IYFG…PPIG, and YVLV…LIIL.

The protein belongs to the TRAP transporter large permease family. As to quaternary structure, the complex comprises the extracytoplasmic solute receptor protein YiaO, and the two transmembrane proteins YiaM and YiaN.

The protein localises to the cell inner membrane. Part of the tripartite ATP-independent periplasmic (TRAP) transport system YiaMNO involved in the uptake of 2,3-diketo-L-gulonate. The polypeptide is 2,3-diketo-L-gulonate TRAP transporter large permease protein YiaN (yiaN) (Escherichia coli (strain K12)).